A 142-amino-acid polypeptide reads, in one-letter code: Large ribosomal subunit protein uL13 (142 aa).

This sequence belongs to the universal ribosomal protein uL13 family. In terms of assembly, part of the 50S ribosomal subunit.

This protein is one of the early assembly proteins of the 50S ribosomal subunit, although it is not seen to bind rRNA by itself. It is important during the early stages of 50S assembly. The protein is Large ribosomal subunit protein uL13 of Yersinia enterocolitica serotype O:8 / biotype 1B (strain NCTC 13174 / 8081).